The sequence spans 508 residues: Probable zinc metalloprotease MCYG_04217 (508 aa).

A glycan (N-linked (GlcNAc...) asparagine) is linked at asparagine 111. Zn(2+)-binding residues include histidine 182, aspartate 202, and glutamate 238. Asparagine 253 carries N-linked (GlcNAc...) asparagine glycosylation. Aspartate 265 is a binding site for Zn(2+). Positions 422 to 508 (MPRNVRVDTS…ERGVAVLPFP (87 aa)) constitute a Fibronectin type-III domain. N-linked (GlcNAc...) asparagine glycosylation is present at asparagine 435.

The protein belongs to the peptidase M28 family. M28B subfamily. Requires Zn(2+) as cofactor.

The protein localises to the secreted. This Arthroderma otae (strain ATCC MYA-4605 / CBS 113480) (Microsporum canis) protein is Probable zinc metalloprotease MCYG_04217.